The chain runs to 316 residues: Transaldolase (316 aa).

The active-site Schiff-base intermediate with substrate is K132.

Belongs to the transaldolase family. Type 1 subfamily.

Its subcellular location is the cytoplasm. It catalyses the reaction D-sedoheptulose 7-phosphate + D-glyceraldehyde 3-phosphate = D-erythrose 4-phosphate + beta-D-fructose 6-phosphate. It functions in the pathway carbohydrate degradation; pentose phosphate pathway; D-glyceraldehyde 3-phosphate and beta-D-fructose 6-phosphate from D-ribose 5-phosphate and D-xylulose 5-phosphate (non-oxidative stage): step 2/3. Its function is as follows. Transaldolase is important for the balance of metabolites in the pentose-phosphate pathway. The chain is Transaldolase from Vibrio cholerae serotype O1 (strain ATCC 39315 / El Tor Inaba N16961).